We begin with the raw amino-acid sequence, 329 residues long: GTPase Obg (329 aa).

The region spanning 1–159 (MQFIDEAKIF…MWVWLHLKLL (159 aa)) is the Obg domain. One can recognise an OBG-type G domain in the interval 160-327 (SDVGLVGLPN…LLANILSELQ (168 aa)). Residues 166–173 (GLPNAGKS), 191–195 (FTTLT), 212–215 (DIPG), 279–282 (TKTD), and 308–310 (SSY) each bind GTP. Residues Ser-173 and Thr-193 each coordinate Mg(2+).

The protein belongs to the TRAFAC class OBG-HflX-like GTPase superfamily. OBG GTPase family. Monomer. Mg(2+) is required as a cofactor.

Its subcellular location is the cytoplasm. Functionally, an essential GTPase which binds GTP, GDP and possibly (p)ppGpp with moderate affinity, with high nucleotide exchange rates and a fairly low GTP hydrolysis rate. Plays a role in control of the cell cycle, stress response, ribosome biogenesis and in those bacteria that undergo differentiation, in morphogenesis control. This chain is GTPase Obg, found in Orientia tsutsugamushi (strain Ikeda) (Rickettsia tsutsugamushi).